Reading from the N-terminus, the 184-residue chain is Photosystem I assembly protein Ycf4 (184 aa).

2 helical membrane-spanning segments follow: residues 22-42 (FFWA…GTSS) and 57-77 (IIFF…LFIS).

Belongs to the Ycf4 family.

It localises to the plastid. The protein localises to the chloroplast thylakoid membrane. Functionally, seems to be required for the assembly of the photosystem I complex. The protein is Photosystem I assembly protein Ycf4 of Aethionema grandiflorum (Persian stone-cress).